A 569-amino-acid polypeptide reads, in one-letter code: Potassium-transporting ATPase potassium-binding subunit (569 aa).

The next 10 helical transmembrane spans lie at Thr3 to Gly23, Phe64 to Val84, Phe133 to Ile153, Ile179 to Gly199, Ile255 to Tyr275, Leu281 to Val301, Phe375 to Ile395, Ile421 to Trp441, Leu497 to Leu517, and Val535 to Pro555.

It belongs to the KdpA family. As to quaternary structure, the system is composed of three essential subunits: KdpA, KdpB and KdpC.

It is found in the cell inner membrane. In terms of biological role, part of the high-affinity ATP-driven potassium transport (or Kdp) system, which catalyzes the hydrolysis of ATP coupled with the electrogenic transport of potassium into the cytoplasm. This subunit binds the periplasmic potassium ions and delivers the ions to the membrane domain of KdpB through an intramembrane tunnel. The sequence is that of Potassium-transporting ATPase potassium-binding subunit from Parabacteroides distasonis (strain ATCC 8503 / DSM 20701 / CIP 104284 / JCM 5825 / NCTC 11152).